Here is a 376-residue protein sequence, read N- to C-terminus: uncharacterized protein (376 aa).

Residues M1–A22 form the signal peptide.

It belongs to the ascovirus HvAV ORF17 family.

This is an uncharacterized protein from Heliothis virescens ascovirus 3e (HvAV-3e).